Reading from the N-terminus, the 386-residue chain is Succinate--CoA ligase [ADP-forming] subunit beta (386 aa).

One can recognise an ATP-grasp domain in the interval 9 to 244 (KDLLTAYQLP…PSQENIRDVL (236 aa)). ATP-binding positions include Lys46, 53 to 55 (GRG), Val102, and Glu107. The Mg(2+) site is built by Asn199 and Asp213. Substrate contacts are provided by residues Asn264 and 321-323 (GIM).

This sequence belongs to the succinate/malate CoA ligase beta subunit family. As to quaternary structure, heterotetramer of two alpha and two beta subunits. It depends on Mg(2+) as a cofactor.

It carries out the reaction succinate + ATP + CoA = succinyl-CoA + ADP + phosphate. The enzyme catalyses GTP + succinate + CoA = succinyl-CoA + GDP + phosphate. Its pathway is carbohydrate metabolism; tricarboxylic acid cycle; succinate from succinyl-CoA (ligase route): step 1/1. Succinyl-CoA synthetase functions in the citric acid cycle (TCA), coupling the hydrolysis of succinyl-CoA to the synthesis of either ATP or GTP and thus represents the only step of substrate-level phosphorylation in the TCA. The beta subunit provides nucleotide specificity of the enzyme and binds the substrate succinate, while the binding sites for coenzyme A and phosphate are found in the alpha subunit. This is Succinate--CoA ligase [ADP-forming] subunit beta from Chlamydia trachomatis serovar A (strain ATCC VR-571B / DSM 19440 / HAR-13).